Here is a 205-residue protein sequence, read N- to C-terminus: Histidine biosynthesis bifunctional protein HisIE (205 aa).

Positions 1-116 are phosphoribosyl-AMP cyclohydrolase; that stretch reads MLKLKFNEEG…KVEKPLPFEV (116 aa). Residues 117 to 205 form a phosphoribosyl-ATP pyrophosphohydrolase region; that stretch reads LPRLQDVIRE…VMEELIRRFK (89 aa).

This sequence in the N-terminal section; belongs to the PRA-CH family. The protein in the C-terminal section; belongs to the PRA-PH family.

It is found in the cytoplasm. The catalysed reaction is 1-(5-phospho-beta-D-ribosyl)-ATP + H2O = 1-(5-phospho-beta-D-ribosyl)-5'-AMP + diphosphate + H(+). It catalyses the reaction 1-(5-phospho-beta-D-ribosyl)-5'-AMP + H2O = 1-(5-phospho-beta-D-ribosyl)-5-[(5-phospho-beta-D-ribosylamino)methylideneamino]imidazole-4-carboxamide. The protein operates within amino-acid biosynthesis; L-histidine biosynthesis; L-histidine from 5-phospho-alpha-D-ribose 1-diphosphate: step 2/9. It participates in amino-acid biosynthesis; L-histidine biosynthesis; L-histidine from 5-phospho-alpha-D-ribose 1-diphosphate: step 3/9. This chain is Histidine biosynthesis bifunctional protein HisIE (hisI), found in Aquifex aeolicus (strain VF5).